Here is a 37-residue protein sequence, read N- to C-terminus: MITDVQLAIFANMLGVSLFLLVVLYHYVAVNNPKKQE.

Topologically, residues Met-1–Asp-4 are lumenal. A helical transmembrane segment spans residues Val-5 to Tyr-25. Over His-26 to Glu-37 the chain is Cytoplasmic.

It belongs to the OST4 family. As to quaternary structure, component of the oligosaccharyltransferase (OST) complex. OST exists in two different complex forms which contain common core subunits RPN1, RPN2, OST48, OST4, DAD1 and TMEM258, either STT3A or STT3B as catalytic subunits, and form-specific accessory subunits. STT3A complex assembly occurs through the formation of 3 subcomplexes. Subcomplex 1 contains RPN1 and TMEM258, subcomplex 2 contains the STT3A-specific subunits STT3A, DC2/OSTC, and KCP2 as well as the core subunit OST4, and subcomplex 3 contains RPN2, DAD1, and OST48. The STT3A complex can form stable complexes with the Sec61 complex or with both the Sec61 and TRAP complexes.

It is found in the endoplasmic reticulum. The protein resides in the endoplasmic reticulum membrane. Its pathway is protein modification; protein glycosylation. Functionally, subunit of the oligosaccharyl transferase (OST) complex that catalyzes the initial transfer of a defined glycan (Glc(3)Man(9)GlcNAc(2) in eukaryotes) from the lipid carrier dolichol-pyrophosphate to an asparagine residue within an Asn-X-Ser/Thr consensus motif in nascent polypeptide chains, the first step in protein N-glycosylation. N-glycosylation occurs cotranslationally and the complex associates with the Sec61 complex at the channel-forming translocon complex that mediates protein translocation across the endoplasmic reticulum (ER). All subunits are required for a maximal enzyme activity. Specifically involved in maintaining stability of STT3A-containing OST complexes. This is Dolichyl-diphosphooligosaccharide--protein glycosyltransferase subunit 4 from Homo sapiens (Human).